Consider the following 823-residue polypeptide: Semaphorin-4B (823 aa).

Residues 1 to 30 (MGRASRSAVLRRALLLLLLLLLLRTTTTRA) form the signal peptide. The Extracellular portion of the chain corresponds to 31-703 (LGPRISVPLG…WGADKSYWNE (673 aa)). The 477-residue stretch at 34–510 (RISVPLGSEE…SHSGVVQVPV (477 aa)) folds into the Sema domain. Asparagine 53, asparagine 56, and asparagine 83 each carry an N-linked (GlcNAc...) asparagine glycan. Cysteines 107 and 118 form a disulfide. Asparagine 129 is a glycosylation site (N-linked (GlcNAc...) asparagine). Intrachain disulfides connect cysteine 136–cysteine 145, cysteine 273–cysteine 386, and cysteine 297–cysteine 346. N-linked (GlcNAc...) asparagine glycosylation is found at asparagine 397 and asparagine 512. The PSI domain occupies 512 to 582 (NCSLYPTCGD…RFLVPGKPCK (71 aa)). A disulfide bridge links cysteine 513 with cysteine 530. Residues asparagine 567, asparagine 615, and asparagine 680 are each glycosylated (N-linked (GlcNAc...) asparagine). The region spanning 589-649 (NTVNTLACPL…FQCWSIEEGF (61 aa)) is the Ig-like C2-type domain. A disulfide bond links cysteine 596 and cysteine 642. The helical transmembrane segment at 704–724 (FLVMCTLFVFAMVLLFLFFLY) threads the bilayer. The Cytoplasmic segment spans residues 725–823 (RHRDGMKLFL…LGSEIRDSVV (99 aa)). A phosphoserine mark is found at serine 779, serine 780, serine 804, and serine 816.

It belongs to the semaphorin family. In terms of assembly, interacts with GIPC PDZ domain.

The protein resides in the membrane. Inhibits axonal extension by providing local signals to specify territories inaccessible for growing axons. In Mus musculus (Mouse), this protein is Semaphorin-4B.